A 281-amino-acid polypeptide reads, in one-letter code: Probable splicing factor, arginine/serine-rich 2 (281 aa).

The RRM 1 domain maps to 2–72 (VRVYIGRLPN…ERVILEFPRR (71 aa)). Basic and acidic residues-rich tracts occupy residues 78 to 97 (EERS…KGGE) and 168 to 190 (KLQG…DRSR). Disordered regions lie at residues 78–100 (EERS…ERQF) and 168–281 (KLQG…SASP). The region spanning 112 to 186 (FRLVIDNLST…RKLKCTDETR (75 aa)) is the RRM 2 domain. Residues 191-215 (SRSPRRRSRSRSPTRSRSPPARRRS) are compositionally biased toward basic residues. The span at 216-225 (PGSDRSDRKS) shows a compositional bias: basic and acidic residues. Residues 245–254 (RSRSGGRRSR) are compositionally biased toward basic residues.

The protein belongs to the splicing factor SR family. Extensively phosphorylated on serine residues in the RS domain.

It is found in the nucleus. Plays a functionally redundant role in spermatogenesis and growth rate control. Required for the development of somatic gonad structures and for progression from larval stage to adulthood. In Caenorhabditis elegans, this protein is Probable splicing factor, arginine/serine-rich 2 (rsp-2).